The primary structure comprises 301 residues: Glycerol-3-phosphate dehydrogenase [NAD(P)+] (301 aa).

Residues tryptophan 13, arginine 33, and lysine 78 each coordinate NADPH. Positions 78 and 106 each coordinate sn-glycerol 3-phosphate. Position 110 (alanine 110) interacts with NADPH. The sn-glycerol 3-phosphate site is built by lysine 161, aspartate 214, serine 224, arginine 225, and asparagine 226. Lysine 161 acts as the Proton acceptor in catalysis. Arginine 225 is a binding site for NADPH. Residue glutamate 251 coordinates NADPH.

Belongs to the NAD-dependent glycerol-3-phosphate dehydrogenase family.

It localises to the cytoplasm. The catalysed reaction is sn-glycerol 3-phosphate + NAD(+) = dihydroxyacetone phosphate + NADH + H(+). The enzyme catalyses sn-glycerol 3-phosphate + NADP(+) = dihydroxyacetone phosphate + NADPH + H(+). Its pathway is membrane lipid metabolism; glycerophospholipid metabolism. Its function is as follows. Catalyzes the reduction of the glycolytic intermediate dihydroxyacetone phosphate (DHAP) to sn-glycerol 3-phosphate (G3P), the key precursor for phospholipid synthesis. The chain is Glycerol-3-phosphate dehydrogenase [NAD(P)+] from Synechococcus sp. (strain RCC307).